A 322-amino-acid polypeptide reads, in one-letter code: Protease HtpX homolog (322 aa).

2 consecutive transmembrane segments (helical) span residues 19-39 (ILLILFPCLVAVLTYLFCYLL) and 61-81 (FINLIPYIIGGVLVWFIIAYF). Position 165 (histidine 165) interacts with Zn(2+). The active site involves glutamate 166. Histidine 169 is a binding site for Zn(2+). 2 helical membrane passes run 175 to 195 (VRLLIISIVFVGIFSMLAQIA) and 216 to 236 (ILILVLAMIVAAIGYFFATLM). Residue glutamate 245 participates in Zn(2+) binding.

Belongs to the peptidase M48B family. Requires Zn(2+) as cofactor.

It localises to the cell inner membrane. The polypeptide is Protease HtpX homolog (Bacteroides fragilis (strain ATCC 25285 / DSM 2151 / CCUG 4856 / JCM 11019 / LMG 10263 / NCTC 9343 / Onslow / VPI 2553 / EN-2)).